The chain runs to 491 residues: Glutamyl-tRNA(Gln) amidotransferase subunit A (491 aa).

Catalysis depends on charge relay system residues Lys80 and Ser155. Ser179 acts as the Acyl-ester intermediate in catalysis.

Belongs to the amidase family. GatA subfamily. As to quaternary structure, heterotrimer of A, B and C subunits.

The enzyme catalyses L-glutamyl-tRNA(Gln) + L-glutamine + ATP + H2O = L-glutaminyl-tRNA(Gln) + L-glutamate + ADP + phosphate + H(+). Functionally, allows the formation of correctly charged Gln-tRNA(Gln) through the transamidation of misacylated Glu-tRNA(Gln) in organisms which lack glutaminyl-tRNA synthetase. The reaction takes place in the presence of glutamine and ATP through an activated gamma-phospho-Glu-tRNA(Gln). In Salinispora arenicola (strain CNS-205), this protein is Glutamyl-tRNA(Gln) amidotransferase subunit A.